Here is a 207-residue protein sequence, read N- to C-terminus: Small ribosomal subunit protein uS4c (207 aa).

Positions 92–156 (MRLDNILFRL…YQSIITKRIE (65 aa)) constitute an S4 RNA-binding domain.

Belongs to the universal ribosomal protein uS4 family. Part of the 30S ribosomal subunit. Contacts protein S5. The interaction surface between S4 and S5 is involved in control of translational fidelity.

The protein resides in the plastid. It is found in the chloroplast. One of the primary rRNA binding proteins, it binds directly to 16S rRNA where it nucleates assembly of the body of the 30S subunit. Functionally, with S5 and S12 plays an important role in translational accuracy. The polypeptide is Small ribosomal subunit protein uS4c (rps4) (Equisetum pratense (Meadow horsetail)).